Consider the following 882-residue polypeptide: DNA mismatch repair protein MutS (882 aa).

An ATP-binding site is contributed by Gly-640–Ser-647.

Belongs to the DNA mismatch repair MutS family.

In terms of biological role, this protein is involved in the repair of mismatches in DNA. It is possible that it carries out the mismatch recognition step. This protein has a weak ATPase activity. The protein is DNA mismatch repair protein MutS of Albidiferax ferrireducens (strain ATCC BAA-621 / DSM 15236 / T118) (Rhodoferax ferrireducens).